The sequence spans 161 residues: Cyclic pyranopterin monophosphate synthase (161 aa).

Residues 73 to 75 and 110 to 111 contribute to the substrate site; these read LCH and ME. Residue Asp125 is part of the active site.

It belongs to the MoaC family. As to quaternary structure, homohexamer; trimer of dimers.

It catalyses the reaction (8S)-3',8-cyclo-7,8-dihydroguanosine 5'-triphosphate = cyclic pyranopterin phosphate + diphosphate. The protein operates within cofactor biosynthesis; molybdopterin biosynthesis. In terms of biological role, catalyzes the conversion of (8S)-3',8-cyclo-7,8-dihydroguanosine 5'-triphosphate to cyclic pyranopterin monophosphate (cPMP). In Pseudomonas savastanoi pv. phaseolicola (strain 1448A / Race 6) (Pseudomonas syringae pv. phaseolicola (strain 1448A / Race 6)), this protein is Cyclic pyranopterin monophosphate synthase.